A 396-amino-acid chain; its full sequence is Elongation factor Tu (396 aa).

Positions 10–206 (KPHCNIGTIG…AVDAYIPQPE (197 aa)) constitute a tr-type G domain. The interval 19 to 26 (GHVDHGKT) is G1. GTP is bound at residue 19–26 (GHVDHGKT). Position 26 (threonine 26) interacts with Mg(2+). Positions 60–64 (GITIS) are G2. The G3 stretch occupies residues 81–84 (DCPG). GTP is bound by residues 81 to 85 (DCPGH) and 136 to 139 (NKCD). The segment at 136–139 (NKCD) is G4. Positions 174–176 (SAL) are G5.

The protein belongs to the TRAFAC class translation factor GTPase superfamily. Classic translation factor GTPase family. EF-Tu/EF-1A subfamily. In terms of assembly, monomer.

Its subcellular location is the cytoplasm. It carries out the reaction GTP + H2O = GDP + phosphate + H(+). Functionally, GTP hydrolase that promotes the GTP-dependent binding of aminoacyl-tRNA to the A-site of ribosomes during protein biosynthesis. This Nitrobacter winogradskyi (strain ATCC 25391 / DSM 10237 / CIP 104748 / NCIMB 11846 / Nb-255) protein is Elongation factor Tu.